Consider the following 229-residue polypeptide: Large ribosomal subunit protein uL1 (229 aa).

It belongs to the universal ribosomal protein uL1 family. Part of the 50S ribosomal subunit.

Binds directly to 23S rRNA. The L1 stalk is quite mobile in the ribosome, and is involved in E site tRNA release. In terms of biological role, protein L1 is also a translational repressor protein, it controls the translation of the L11 operon by binding to its mRNA. The polypeptide is Large ribosomal subunit protein uL1 (Streptococcus pneumoniae (strain JJA)).